The following is a 668-amino-acid chain: DNA ligase (668 aa).

NAD(+) is bound by residues 34 to 38 (DTEYD), 83 to 84 (SL), and E114. The active-site N6-AMP-lysine intermediate is K116. R137, E171, K286, and K310 together coordinate NAD(+). Positions 404, 407, 422, and 427 each coordinate Zn(2+). Residues 588–668 (NSDSIIANKT…FFDLLKSEKG (81 aa)) form the BRCT domain.

It belongs to the NAD-dependent DNA ligase family. LigA subfamily. Requires Mg(2+) as cofactor. Mn(2+) is required as a cofactor.

The catalysed reaction is NAD(+) + (deoxyribonucleotide)n-3'-hydroxyl + 5'-phospho-(deoxyribonucleotide)m = (deoxyribonucleotide)n+m + AMP + beta-nicotinamide D-nucleotide.. In terms of biological role, DNA ligase that catalyzes the formation of phosphodiester linkages between 5'-phosphoryl and 3'-hydroxyl groups in double-stranded DNA using NAD as a coenzyme and as the energy source for the reaction. It is essential for DNA replication and repair of damaged DNA. The polypeptide is DNA ligase (Mycoplasma capricolum subsp. capricolum (strain California kid / ATCC 27343 / NCTC 10154)).